A 343-amino-acid chain; its full sequence is Anthranilate phosphoribosyltransferase (343 aa).

5-phospho-alpha-D-ribose 1-diphosphate contacts are provided by residues Gly77, Gly80–Asp81, Thr85, Asn87–Thr90, Lys105–Gly113, and Ser117. Gly77 provides a ligand contact to anthranilate. Ser89 provides a ligand contact to Mg(2+). Asn108 contributes to the anthranilate binding site. Arg163 is a binding site for anthranilate. 2 residues coordinate Mg(2+): Asp222 and Glu223.

This sequence belongs to the anthranilate phosphoribosyltransferase family. In terms of assembly, homodimer. Mg(2+) serves as cofactor.

The catalysed reaction is N-(5-phospho-beta-D-ribosyl)anthranilate + diphosphate = 5-phospho-alpha-D-ribose 1-diphosphate + anthranilate. The protein operates within amino-acid biosynthesis; L-tryptophan biosynthesis; L-tryptophan from chorismate: step 2/5. In terms of biological role, catalyzes the transfer of the phosphoribosyl group of 5-phosphorylribose-1-pyrophosphate (PRPP) to anthranilate to yield N-(5'-phosphoribosyl)-anthranilate (PRA). In Cenarchaeum symbiosum (strain A), this protein is Anthranilate phosphoribosyltransferase.